The following is a 412-amino-acid chain: uncharacterized protein (412 aa).

H49 is a Zn(2+) binding site. E52 functions as the Proton acceptor in the catalytic mechanism. The Zn(2+) site is built by H53 and E129.

Belongs to the peptidase M16 family. Zn(2+) serves as cofactor.

This is an uncharacterized protein from Rickettsia bellii (strain RML369-C).